The sequence spans 150 residues: Large-conductance mechanosensitive channel (150 aa).

2 consecutive transmembrane segments (helical) span residues 14-34 and 81-101; these read VIDLAIGIIIGAAFGKIVTSF and GVFLNSIIDFIIVAVAIFLVV.

The protein belongs to the MscL family. In terms of assembly, homopentamer.

It is found in the cell membrane. In terms of biological role, channel that opens in response to stretch forces in the membrane lipid bilayer. May participate in the regulation of osmotic pressure changes within the cell. The protein is Large-conductance mechanosensitive channel of Syntrophomonas wolfei subsp. wolfei (strain DSM 2245B / Goettingen).